An 81-amino-acid chain; its full sequence is Protein Vpu (81 aa).

Residues 1 to 7 are Extracellular-facing; that stretch reads MQPLQIL. The chain crosses the membrane as a helical span at residues 8–28; the sequence is AIVALVVAAIIAIVVWTIVYI. At 29–81 the chain is on the cytoplasmic side; the sequence is EYRKILRQRKIDRLIDRITERAEDSGNESEGDQEELSALVERGHLAPWDVDDL. Positions 50–81 are disordered; it reads AEDSGNESEGDQEELSALVERGHLAPWDVDDL. A phosphoserine; by host CK2 mark is found at S53 and S57. Residues 53-63 show a composition bias toward acidic residues; that stretch reads SGNESEGDQEE.

Belongs to the HIV-1 VPU protein family. As to quaternary structure, homopentamer. Interacts with host CD4 and BRTC; these interactions induce proteasomal degradation of CD4. Interacts with host BST2; this interaction leads to the degradation of host BST2. Interacts with host FBXW11. Interacts with host AP1M1; this interaction plays a role in the mistrafficking and subsequent degradation of host BST2. Interacts with host RANBP2; this interaction allows Vpu to down-regulate host BLM sumoylation. In terms of processing, phosphorylated by host CK2. This phosphorylation is necessary for interaction with human BTRC and degradation of CD4.

It is found in the host membrane. With respect to regulation, ion channel activity is inhibited by hexamethylene amiloride in vitro. Its function is as follows. Enhances virion budding by targeting host CD4 and Tetherin/BST2 to proteasome degradation. Degradation of CD4 prevents any unwanted premature interactions between viral Env and its host receptor CD4 in the endoplasmic reticulum. Degradation of antiretroviral protein Tetherin/BST2 is important for virion budding, as BST2 tethers new viral particles to the host cell membrane. Mechanistically, Vpu bridges either CD4 or BST2 to BTRC, a substrate recognition subunit of the Skp1/Cullin/F-box protein E3 ubiquitin ligase, induces their ubiquitination and subsequent proteasomal degradation. The alteration of the E3 ligase specificity by Vpu seems to promote the degradation of host IKBKB, leading to NF-kappa-B down-regulation and subsequent apoptosis. Acts as a viroporin that forms an oligomeric ion channel in membranes. Modulates the host DNA repair mechanisms to promote degradation of nuclear viral cDNA in cells that are already productively infected in order to suppress immune sensing and proviral hyper-integration (superinfection). Manipulates PML-NBs and modulates SUMOylation of host BLM protein thereby enhancing its DNA-end processing activity toward viral unintegrated linear DNA. Also inhibits RAD52-mediated homologous repair of viral cDNA, preventing the generation of dead-end circular forms of single copies of the long terminal repeat and permitting sustained nucleolytic attack. This is Protein Vpu from Human immunodeficiency virus type 1 group M subtype B (isolate SF162) (HIV-1).